The following is a 241-amino-acid chain: Phosphoadenosine 5'-phosphosulfate reductase (241 aa).

Residues 221 to 241 (GADPRSGRWRGKAKTECGLHA) are disordered. Cys237 functions as the Nucleophile; cysteine thiosulfonate intermediate in the catalytic mechanism.

This sequence belongs to the PAPS reductase family. CysH subfamily.

The protein localises to the cytoplasm. It carries out the reaction [thioredoxin]-disulfide + sulfite + adenosine 3',5'-bisphosphate + 2 H(+) = [thioredoxin]-dithiol + 3'-phosphoadenylyl sulfate. Its pathway is sulfur metabolism; hydrogen sulfide biosynthesis; sulfite from sulfate: step 3/3. Catalyzes the formation of sulfite from phosphoadenosine 5'-phosphosulfate (PAPS) using thioredoxin as an electron donor. This chain is Phosphoadenosine 5'-phosphosulfate reductase, found in Gloeobacter violaceus (strain ATCC 29082 / PCC 7421).